Reading from the N-terminus, the 230-residue chain is Orotidine 5'-phosphate decarboxylase (230 aa).

Substrate is bound by residues Asp-9, Lys-31, 58–67 (DLKFFDIPNT), Thr-120, Arg-180, Gln-188, Gly-208, and Arg-209. Lys-60 functions as the Proton donor in the catalytic mechanism.

This sequence belongs to the OMP decarboxylase family. Type 1 subfamily. As to quaternary structure, homodimer.

It catalyses the reaction orotidine 5'-phosphate + H(+) = UMP + CO2. It functions in the pathway pyrimidine metabolism; UMP biosynthesis via de novo pathway; UMP from orotate: step 2/2. Its function is as follows. Catalyzes the decarboxylation of orotidine 5'-monophosphate (OMP) to uridine 5'-monophosphate (UMP). The chain is Orotidine 5'-phosphate decarboxylase from Maridesulfovibrio salexigens (strain ATCC 14822 / DSM 2638 / NCIMB 8403 / VKM B-1763) (Desulfovibrio salexigens).